The following is a 384-amino-acid chain: uncharacterized protein (384 aa).

Residues 327 to 339 (KKEKKEKKEKKPK) show a composition bias toward basic residues. Residues 327 to 358 (KKEKKEKKEKKPKKAVEEEPKQYLTPEFVNDD) form a disordered region.

This is an uncharacterized protein from Magallana gigas (Pacific oyster).